Here is a 115-residue protein sequence, read N- to C-terminus: Large ribosomal subunit protein bL19 (115 aa).

This sequence belongs to the bacterial ribosomal protein bL19 family.

In terms of biological role, this protein is located at the 30S-50S ribosomal subunit interface and may play a role in the structure and function of the aminoacyl-tRNA binding site. The polypeptide is Large ribosomal subunit protein bL19 (Coxiella burnetii (strain CbuK_Q154) (Coxiella burnetii (strain Q154))).